The following is a 346-amino-acid chain: uncharacterized protein (346 aa).

The N-terminal stretch at M1–G28 is a signal peptide.

This is an uncharacterized protein from Methanocaldococcus jannaschii (strain ATCC 43067 / DSM 2661 / JAL-1 / JCM 10045 / NBRC 100440) (Methanococcus jannaschii).